Reading from the N-terminus, the 92-residue chain is Small ribosomal subunit protein uS19c (92 aa).

It belongs to the universal ribosomal protein uS19 family.

Its subcellular location is the plastid. It localises to the chloroplast. Functionally, protein S19 forms a complex with S13 that binds strongly to the 16S ribosomal RNA. This chain is Small ribosomal subunit protein uS19c (rps19), found in Marchantia polymorpha (Common liverwort).